The chain runs to 381 residues: uncharacterized protein (381 aa).

9 consecutive transmembrane segments (helical) span residues 59-79 (LITLFGFISIIVSYFVTLYYM), 84-104 (GVAPKWLYLFNALCIFIYQTM), 147-167 (VGVNQISFFTTLWIMYVFFMA), 190-210 (SMMAGHIFTFFYGEQFWFNTI), 222-242 (LVLLVVILGGVGTILLNTFSI), 250-270 (ILTNIINLVPISILLGVSIYW), 284-304 (HYFMGIFGILFALVTGKLILA), 311-331 (LSPIQLIMLPLIAVILNIYKF), and 344-364 (VYFFVVFIVYIHFAYDVVTSL).

It belongs to the CDP-alcohol phosphatidyltransferase class-I family.

It is found in the membrane. This is an uncharacterized protein from Dictyostelium discoideum (Social amoeba).